The chain runs to 130 residues: Small ribosomal subunit protein uS8A (130 aa).

It belongs to the universal ribosomal protein uS8 family. As to quaternary structure, component of the small ribosomal subunit (SSU). Mature ribosomes consist of a small (40S) and a large (60S) subunit. The 40S subunit contains about 32 different proteins and 1 molecule of RNA (18S). The 60S subunit contains 45 different proteins and 3 molecules of RNA (25S, 5.8S and 5S).

The protein localises to the cytoplasm. Its function is as follows. Component of the ribosome, a large ribonucleoprotein complex responsible for the synthesis of proteins in the cell. The small ribosomal subunit (SSU) binds messenger RNAs (mRNAs) and translates the encoded message by selecting cognate aminoacyl-transfer RNA (tRNA) molecules. The large subunit (LSU) contains the ribosomal catalytic site termed the peptidyl transferase center (PTC), which catalyzes the formation of peptide bonds, thereby polymerizing the amino acids delivered by tRNAs into a polypeptide chain. The nascent polypeptides leave the ribosome through a tunnel in the LSU and interact with protein factors that function in enzymatic processing, targeting, and the membrane insertion of nascent chains at the exit of the ribosomal tunnel. The sequence is that of Small ribosomal subunit protein uS8A (RPS22A) from Candida albicans (strain SC5314 / ATCC MYA-2876) (Yeast).